A 514-amino-acid polypeptide reads, in one-letter code: ATP synthase subunit alpha (514 aa).

Residue 170–177 (GDRQIGKT) participates in ATP binding.

Belongs to the ATPase alpha/beta chains family. F-type ATPases have 2 components, CF(1) - the catalytic core - and CF(0) - the membrane proton channel. CF(1) has five subunits: alpha(3), beta(3), gamma(1), delta(1), epsilon(1). CF(0) has three main subunits: a(1), b(2) and c(9-12). The alpha and beta chains form an alternating ring which encloses part of the gamma chain. CF(1) is attached to CF(0) by a central stalk formed by the gamma and epsilon chains, while a peripheral stalk is formed by the delta and b chains.

It is found in the cell inner membrane. The enzyme catalyses ATP + H2O + 4 H(+)(in) = ADP + phosphate + 5 H(+)(out). In terms of biological role, produces ATP from ADP in the presence of a proton gradient across the membrane. The alpha chain is a regulatory subunit. This is ATP synthase subunit alpha from Pseudomonas fluorescens (strain Pf0-1).